A 164-amino-acid polypeptide reads, in one-letter code: UPF0304 protein NT01EI_2691 (164 aa).

This sequence belongs to the UPF0304 family.

This chain is UPF0304 protein NT01EI_2691, found in Edwardsiella ictaluri (strain 93-146).